A 115-amino-acid polypeptide reads, in one-letter code: U3-lycotoxin-Ls1a (115 aa).

Residues 1–20 (MKFVLLFGVLLVTFFSYSSA) form the signal peptide. A propeptide spanning residues 21–44 (EMLDDFDQADEDELLSLIEKGEAR) is cleaved from the precursor. 4 disulfides stabilise this stretch: Cys-48–Cys-63, Cys-55–Cys-72, Cys-62–Cys-87, and Cys-74–Cys-85.

Belongs to the neurotoxin 19 (CSTX) family. 01 subfamily. In terms of tissue distribution, expressed by the venom gland.

The protein localises to the secreted. In Lycosa singoriensis (Wolf spider), this protein is U3-lycotoxin-Ls1a.